The sequence spans 136 residues: Plastocyanin (136 aa).

Residues 1–34 (MSLVFNLVKRLQLILLSLVVGGLAVAFLSNPAAA) form the signal peptide. The region spanning 35–136 (ETYIVKMGSD…GMVGKIIVNG (102 aa)) is the Plastocyanin-like domain. Residues H73, C120, H123, and M128 each contribute to the Cu cation site.

It belongs to the plastocyanin family. Cu(2+) is required as a cofactor.

Its subcellular location is the cellular thylakoid membrane. In terms of biological role, participates in electron transfer between P700 and the cytochrome b6-f complex in photosystem I. The chain is Plastocyanin from Synechococcus sp. (strain JA-2-3B'a(2-13)) (Cyanobacteria bacterium Yellowstone B-Prime).